The chain runs to 184 residues: Acireductone dioxygenase (184 aa).

Fe(2+) contacts are provided by His97, His99, Glu103, and His141. His97, His99, Glu103, and His141 together coordinate Ni(2+).

This sequence belongs to the acireductone dioxygenase (ARD) family. In terms of assembly, monomer. Requires Fe(2+) as cofactor. The cofactor is Ni(2+).

The enzyme catalyses 1,2-dihydroxy-5-(methylsulfanyl)pent-1-en-3-one + O2 = 3-(methylsulfanyl)propanoate + CO + formate + 2 H(+). It catalyses the reaction 1,2-dihydroxy-5-(methylsulfanyl)pent-1-en-3-one + O2 = 4-methylsulfanyl-2-oxobutanoate + formate + 2 H(+). The protein operates within amino-acid biosynthesis; L-methionine biosynthesis via salvage pathway; L-methionine from S-methyl-5-thio-alpha-D-ribose 1-phosphate: step 5/6. Functionally, catalyzes 2 different reactions between oxygen and the acireductone 1,2-dihydroxy-3-keto-5-methylthiopentene (DHK-MTPene) depending upon the metal bound in the active site. Fe-containing acireductone dioxygenase (Fe-ARD) produces formate and 2-keto-4-methylthiobutyrate (KMTB), the alpha-ketoacid precursor of methionine in the methionine recycle pathway. Ni-containing acireductone dioxygenase (Ni-ARD) produces methylthiopropionate, carbon monoxide and formate, and does not lie on the methionine recycle pathway. This chain is Acireductone dioxygenase, found in Parvibaculum lavamentivorans (strain DS-1 / DSM 13023 / NCIMB 13966).